The primary structure comprises 389 residues: MNLHEYQSKQLFADYGLPVSTGFACDTPEEVAAKAKEIGGDKWVVKAQVHAGGRGKAGGVKLVDTPEDAAAFAKKWLGKQLVTFQTDEHGQPVSKILVETCTDIAKELYLSAVLDRASRRVVFMASTEGGVDIETVAEETPEKILKAEIDPLVGAQPYQAREIAFKLGLEGKQVNQFAKIFVGLAKLFVDKDLALIEVNPLVITDTGDLHCLDAKINVDGSALYRHPDIKALDDPSQEDERERRAAEWDLNYVALEGNIGCMVNGAGLAMGTMDLVKLKGGAPANFLDVGGGATKERVTEAFKIILSDDQVKGVLVNIFGGIVRCDLIAEGIIGAVEEVGVTVPVVVRLEGNNAELGSQKLAESGMNIIAAQSFDDAAEQVVKAVGGAA.

The 236-residue stretch at 9 to 244 folds into the ATP-grasp domain; it reads KQLFADYGLP…PSQEDERERR (236 aa). Residues Lys46, 53–55, Glu99, Thr102, and Glu107 contribute to the ATP site; that span reads GRG. Mg(2+) contacts are provided by Asn199 and Asp213. Substrate is bound by residues Asn264 and 321-323; that span reads GIV.

Belongs to the succinate/malate CoA ligase beta subunit family. Heterotetramer of two alpha and two beta subunits. It depends on Mg(2+) as a cofactor.

It catalyses the reaction succinate + ATP + CoA = succinyl-CoA + ADP + phosphate. It carries out the reaction GTP + succinate + CoA = succinyl-CoA + GDP + phosphate. The protein operates within carbohydrate metabolism; tricarboxylic acid cycle; succinate from succinyl-CoA (ligase route): step 1/1. Functionally, succinyl-CoA synthetase functions in the citric acid cycle (TCA), coupling the hydrolysis of succinyl-CoA to the synthesis of either ATP or GTP and thus represents the only step of substrate-level phosphorylation in the TCA. The beta subunit provides nucleotide specificity of the enzyme and binds the substrate succinate, while the binding sites for coenzyme A and phosphate are found in the alpha subunit. This chain is Succinate--CoA ligase [ADP-forming] subunit beta, found in Alcanivorax borkumensis (strain ATCC 700651 / DSM 11573 / NCIMB 13689 / SK2).